The following is an 876-amino-acid chain: MAP7 domain-containing protein 3 (876 aa).

Methionine 1 carries the post-translational modification N-acetylmethionine. A coiled-coil region spans residues 65-144 (NDIKQRLARE…DEAQKEKFTA (80 aa)). Disordered stretches follow at residues 72–137 (ARER…KDEA) and 170–246 (AMAN…KPRV). Polar residues predominate over residues 171 to 183 (MANSESKTANKRS). Position 185 is a phosphoserine (serine 185). The segment covering 191 to 211 (QGTSALIRQMPLSSAGLQNSV) has biased composition (polar residues). Over residues 214–244 (RKTDKERSSSLNRRDSNLHSSTDKEQAERKP) the composition is skewed to basic and acidic residues. Position 322 is a phosphoserine (serine 322). The segment at 407–475 (EAAPEGSLEA…ARDAPKKSEM (69 aa)) is disordered. The segment covering 425–438 (APKESVKGSPKESM) has biased composition (basic and acidic residues). Residues serine 441, serine 457, and serine 461 each carry the phosphoserine modification. Residues 465 to 475 (KARDAPKKSEM) are compositionally biased toward basic and acidic residues. At serine 490 the chain carries Phosphoserine. 3 disordered regions span residues 509-533 (SPIS…SKQS), 613-697 (QREK…KKEH), and 723-754 (RKTD…SDKD). Positions 510–521 (PISTNRQIQKNC) are enriched in polar residues. Serine 524 is subject to Phosphoserine. Coiled coils occupy residues 558–640 (VKKK…MAKE) and 689–724 (EADK…RTRK). Basic and acidic residues-rich tracts occupy residues 613 to 639 (QREK…DMAK) and 680 to 697 (GDAK…KKEH). Over residues 742–752 (EEAEADNEESD) the composition is skewed to acidic residues. Phosphoserine occurs at positions 770 and 817. The segment at 802–876 (PKTYFNGDLK…LPKSSDTFRQ (75 aa)) is disordered. The span at 820–830 (DTSIQEVVSRP) shows a compositional bias: polar residues. Residues 831-842 (SSKRMTSHTTKT) show a composition bias toward basic residues. A Phosphoserine modification is found at serine 832. The segment covering 848-860 (TNTTSRSSAQTKS) has biased composition (polar residues). Basic and acidic residues predominate over residues 861–876 (EGFHDILPKSSDTFRQ).

The protein belongs to the MAP7 family. Interacts (via N-terminus coiled coil domains) with tubulin and microtubules.

It is found in the cytoplasm. The protein resides in the cytoskeleton. The protein localises to the spindle. Its function is as follows. Promotes the assembly and stability of microtubules. This chain is MAP7 domain-containing protein 3 (MAP7D3), found in Homo sapiens (Human).